The chain runs to 518 residues: Lysine--tRNA ligase (518 aa).

E407 and E414 together coordinate Mg(2+).

It belongs to the class-II aminoacyl-tRNA synthetase family. Homodimer. The cofactor is Mg(2+).

It localises to the cytoplasm. It catalyses the reaction tRNA(Lys) + L-lysine + ATP = L-lysyl-tRNA(Lys) + AMP + diphosphate. This Helicobacter hepaticus (strain ATCC 51449 / 3B1) protein is Lysine--tRNA ligase.